The following is a 3901-amino-acid chain: Nonribosomal peptide synthetase opaA (3901 aa).

An adenylation 1 region spans residues 248–641 (HNAQHHPSVV…HRKDNQIKIR (394 aa)). Positions 780 to 854 (LPVTANEIVV…DMATRLTRIK (75 aa)) constitute a Carrier 1 domain. At S815 the chain carries O-(pantetheine 4'-phosphoryl)serine. Residues 891 to 1164 (DAYPCSALQE…IATVPIRINL (274 aa)) form a condensation 1 region. Residues 1328 to 1725 (QSHAQKTPKS…GRIGNQVKLR (398 aa)) are adenylation 2. Residues 1858-1936 (RTPLDTERDL…QIAAQAATRA (79 aa)) enclose the Carrier 2 domain. An O-(pantetheine 4'-phosphoryl)serine modification is found at S1895. Positions 1953-2261 (KLTPIQQLFF…KDARRRLTRN (309 aa)) are epimerase. Residues 2403–2826 (ENLYPCAPIQ…LVSTDHKRLL (424 aa)) form a condensation 2 region. The segment at 2846–3243 (QQHVRETPDA…GRKDSQIKIR (398 aa)) is adenylation 3. The 77-residue stretch at 3375-3451 (LPSTAGEQLL…ALAARSRSKD (77 aa)) folds into the Carrier 3 domain. S3412 is modified (O-(pantetheine 4'-phosphoryl)serine). Residues 3509 to 3837 (HHFSFAVEGK…EDLKTHFTLN (329 aa)) form a condensation 3 region.

Belongs to the NRP synthetase family.

Its function is as follows. Nonribosomal peptide synthetase; part of the gene cluster that mediates the biosynthesis of oxepinamides, derivatives of anthranilyl-containing tripeptides that share an oxepin ring and a fused pyrimidinone moiety. The nonribosomal peptide synthetase (NRPS) opaA assembles the quinazolinone core with D-Phe incorporation. The first adenylation domain (A1) of opaA loads and activates anthranilic acid whereas the second A domain (A2) is for activating of L-Phe, which is then converted to D-form by the E domain. The third A domain (A3) is responsible for L-Ile activation and the terminal condensation domain C3 for cyclization and releasing the NRPS product protuboxepin K. The cytochrome P450 monooxygenase opaB then catalyzes alone the oxepin ring formation to convert protuboxepin K into protuboxepin A. The flavoenzyme opaC installs subsequently one hydroxyl group at the oxepin ring, accompanied by double bond migration, to form 15-epi-oxepinamide E. The epimerase opaE changes the D-Phe residue back to L-form, leading to oxepinamide E, which is further methylated at the hydroxyl group at C-12 by the O-methyltransferase OpaF to yield oxepinamide F. In Aspergillus ustus, this protein is Nonribosomal peptide synthetase opaA.